The primary structure comprises 308 residues: Homoserine kinase (308 aa).

94–104 serves as a coordination point for ATP; the sequence is PLARGLGSSAT.

It belongs to the GHMP kinase family. Homoserine kinase subfamily.

It localises to the cytoplasm. It catalyses the reaction L-homoserine + ATP = O-phospho-L-homoserine + ADP + H(+). It functions in the pathway amino-acid biosynthesis; L-threonine biosynthesis; L-threonine from L-aspartate: step 4/5. Its function is as follows. Catalyzes the ATP-dependent phosphorylation of L-homoserine to L-homoserine phosphate. In Crocosphaera subtropica (strain ATCC 51142 / BH68) (Cyanothece sp. (strain ATCC 51142)), this protein is Homoserine kinase.